The sequence spans 563 residues: Pyruvate decarboxylase (563 aa).

2 residues coordinate pyruvate: Asp-28 and His-115. Residues Thr-390 and 413–415 (GSI) each bind thiamine diphosphate. Mg(2+) is bound at residue Asp-444. Thiamine diphosphate contacts are provided by residues 445 to 446 (GS) and 471 to 476 (NDGYTI). Residues Asn-471 and Gly-473 each contribute to the Mg(2+) site. Position 477 (Glu-477) interacts with pyruvate.

Belongs to the TPP enzyme family. As to quaternary structure, homotetramer. The cofactor is Mg(2+). Thiamine diphosphate serves as cofactor.

It carries out the reaction a 2-oxocarboxylate + H(+) = an aldehyde + CO2. The enzyme catalyses pyruvate + H(+) = acetaldehyde + CO2. This chain is Pyruvate decarboxylase (PDC1), found in Kluyveromyces lactis (strain ATCC 8585 / CBS 2359 / DSM 70799 / NBRC 1267 / NRRL Y-1140 / WM37) (Yeast).